The sequence spans 444 residues: Cerebral cavernous malformations 2 protein (444 aa).

Positions M1 to T37 are disordered. S15 carries the post-translational modification Phosphoserine. Residues L22–T37 show a composition bias toward basic and acidic residues. The region spanning L59–S248 is the PID domain. The residue at position 164 (S164) is a Phosphoserine. Residues S283 to D376 are harmonin homology domain. Phosphoserine occurs at positions 384 and 393. The disordered stretch occupies residues A391 to R423. A compositionally biased stretch (low complexity) spans L392 to S408. Residue T394 is modified to Phosphothreonine. Residue S396 is modified to Phosphoserine. The residue at position 399 (T399) is a Phosphothreonine.

This sequence belongs to the CCM2 family. Part of a complex with MAP2K3, MAP3K3 and RAC1. Binds RAC1 directly and independently of its nucleotide-bound state. Interacts with HEG1 and KRIT1; KRIT1 greatly facilitates the interaction with HEG1. Interacts with PDCD10.

The protein localises to the cytoplasm. Component of the CCM signaling pathway which is a crucial regulator of heart and vessel formation and integrity. May act through the stabilization of endothelial cell junctions. May function as a scaffold protein for MAP2K3-MAP3K3 signaling. Seems to play a major role in the modulation of MAP3K3-dependent p38 activation induced by hyperosmotic shock. In Homo sapiens (Human), this protein is Cerebral cavernous malformations 2 protein (CCM2).